Here is a 468-residue protein sequence, read N- to C-terminus: 6-phosphogluconate dehydrogenase, decarboxylating (468 aa).

Residues 10-15, 33-35, 74-76, and N102 each bind NADP(+); these read GMAVMG, NRS, and IKS. Substrate-binding positions include N102 and 128-130; that span reads SGG. The active-site Proton acceptor is the K182. 185-186 serves as a coordination point for substrate; the sequence is HN. The active-site Proton donor is E189. Positions 190, 259, 286, 445, and 451 each coordinate substrate.

Belongs to the 6-phosphogluconate dehydrogenase family. As to quaternary structure, homodimer.

It carries out the reaction 6-phospho-D-gluconate + NADP(+) = D-ribulose 5-phosphate + CO2 + NADPH. It functions in the pathway carbohydrate degradation; pentose phosphate pathway; D-ribulose 5-phosphate from D-glucose 6-phosphate (oxidative stage): step 3/3. Its function is as follows. Catalyzes the oxidative decarboxylation of 6-phosphogluconate to ribulose 5-phosphate and CO(2), with concomitant reduction of NADP to NADPH. The protein is 6-phosphogluconate dehydrogenase, decarboxylating (gnd) of Buchnera aphidicola subsp. Baizongia pistaciae (strain Bp).